A 112-amino-acid chain; its full sequence is Small ribosomal subunit protein bS6 (112 aa).

The protein belongs to the bacterial ribosomal protein bS6 family.

Binds together with bS18 to 16S ribosomal RNA. The protein is Small ribosomal subunit protein bS6 (rpsF) of Chlamydia pneumoniae (Chlamydophila pneumoniae).